We begin with the raw amino-acid sequence, 157 residues long: Methylamine utilization protein MauL (157 aa).

It functions in the pathway one-carbon metabolism; methylamine degradation. Its function is as follows. Probably involved in TTQ prosthetic group biosynthesis. This Methylobacillus flagellatus (strain ATCC 51484 / DSM 6875 / VKM B-1610 / KT) protein is Methylamine utilization protein MauL (mauL).